The primary structure comprises 282 residues: Bifunctional protein FolD (282 aa).

Residues 166 to 168 (GAS) and isoleucine 232 contribute to the NADP(+) site.

It belongs to the tetrahydrofolate dehydrogenase/cyclohydrolase family. As to quaternary structure, homodimer.

The enzyme catalyses (6R)-5,10-methylene-5,6,7,8-tetrahydrofolate + NADP(+) = (6R)-5,10-methenyltetrahydrofolate + NADPH. It catalyses the reaction (6R)-5,10-methenyltetrahydrofolate + H2O = (6R)-10-formyltetrahydrofolate + H(+). It functions in the pathway one-carbon metabolism; tetrahydrofolate interconversion. Its function is as follows. Catalyzes the oxidation of 5,10-methylenetetrahydrofolate to 5,10-methenyltetrahydrofolate and then the hydrolysis of 5,10-methenyltetrahydrofolate to 10-formyltetrahydrofolate. This Histophilus somni (strain 129Pt) (Haemophilus somnus) protein is Bifunctional protein FolD.